The sequence spans 219 residues: Ribose-5-phosphate isomerase A (219 aa).

Residues 28–31 (SGST), 81–84 (DGAD), and 94–97 (KGGG) each bind substrate. E103 serves as the catalytic Proton acceptor. Substrate is bound at residue K121.

This sequence belongs to the ribose 5-phosphate isomerase family. Homodimer.

It catalyses the reaction aldehydo-D-ribose 5-phosphate = D-ribulose 5-phosphate. The protein operates within carbohydrate degradation; pentose phosphate pathway; D-ribose 5-phosphate from D-ribulose 5-phosphate (non-oxidative stage): step 1/1. Catalyzes the reversible conversion of ribose-5-phosphate to ribulose 5-phosphate. In Actinobacillus succinogenes (strain ATCC 55618 / DSM 22257 / CCUG 43843 / 130Z), this protein is Ribose-5-phosphate isomerase A.